The following is a 144-amino-acid chain: uncharacterized protein (144 aa).

The disordered stretch occupies residues lysine 90–methionine 144. Residues lysine 98 to lysine 130 are compositionally biased toward basic residues.

This is an uncharacterized protein from Sputnik virophage.